The sequence spans 184 residues: Leucine-rich repeat-containing protein 20 (184 aa).

LRR repeat units lie at residues 51–72 (QIHL…FMTT), 75–96 (QLRE…VSAL), 98–120 (HLKA…TALP), 121–141 (ALET…EKLA), and 145–167 (ALRS…APPL). The residue at position 175 (Ser-175) is a Phosphoserine.

The sequence is that of Leucine-rich repeat-containing protein 20 (LRRC20) from Homo sapiens (Human).